The sequence spans 526 residues: ATP synthase subunit alpha (526 aa).

ATP is bound at residue 171-178 (GDRQTGKT).

It belongs to the ATPase alpha/beta chains family. As to quaternary structure, F-type ATPases have 2 components, CF(1) - the catalytic core - and CF(0) - the membrane proton channel. CF(1) has five subunits: alpha(3), beta(3), gamma(1), delta(1), epsilon(1). CF(0) has four main subunits: a(1), b(1), b'(1) and c(9-12).

It is found in the cell inner membrane. The catalysed reaction is ATP + H2O + 4 H(+)(in) = ADP + phosphate + 5 H(+)(out). Its function is as follows. Produces ATP from ADP in the presence of a proton gradient across the membrane. The alpha chain is a regulatory subunit. This Chlorobium phaeobacteroides (strain DSM 266 / SMG 266 / 2430) protein is ATP synthase subunit alpha.